Reading from the N-terminus, the 427-residue chain is Glutamate-1-semialdehyde 2,1-aminomutase (427 aa).

The residue at position 265 (lysine 265) is an N6-(pyridoxal phosphate)lysine.

It belongs to the class-III pyridoxal-phosphate-dependent aminotransferase family. HemL subfamily. In terms of assembly, homodimer. Requires pyridoxal 5'-phosphate as cofactor.

It is found in the cytoplasm. It carries out the reaction (S)-4-amino-5-oxopentanoate = 5-aminolevulinate. The protein operates within porphyrin-containing compound metabolism; protoporphyrin-IX biosynthesis; 5-aminolevulinate from L-glutamyl-tRNA(Glu): step 2/2. The protein is Glutamate-1-semialdehyde 2,1-aminomutase of Pseudomonas savastanoi pv. phaseolicola (strain 1448A / Race 6) (Pseudomonas syringae pv. phaseolicola (strain 1448A / Race 6)).